Reading from the N-terminus, the 202-residue chain is Coiled-coil domain-containing protein mdt-28 (202 aa).

2 stretches are compositionally biased toward acidic residues: residues 1-15 (MFEE…EEQE) and 28-45 (EDID…DDEY). Positions 1–83 (MFEELDAEDG…NEDDEEPIEP (83 aa)) are disordered. Positions 159–184 (IEEENLDEAIERQETIIAAAREMLNS) form a coiled coil.

Interacts with mdt-6 and mdt-30. Ubiquitously expressed in tissues including epidermal, intestinal, pharyngeal and uterine, and is also expressed in vulval muscle cells and gut granules.

The protein localises to the nucleus. It is found in the cytoplasm. Its function is as follows. Plays a role in normal growth and development. This is Coiled-coil domain-containing protein mdt-28 from Caenorhabditis elegans.